Here is a 529-residue protein sequence, read N- to C-terminus: Bifunctional purine biosynthesis protein PurH (529 aa).

The 148-residue stretch at 1-148 (MQQRRPIRRA…KNHKDVAIVV (148 aa)) folds into the MGS-like domain.

Belongs to the PurH family.

It carries out the reaction (6R)-10-formyltetrahydrofolate + 5-amino-1-(5-phospho-beta-D-ribosyl)imidazole-4-carboxamide = 5-formamido-1-(5-phospho-D-ribosyl)imidazole-4-carboxamide + (6S)-5,6,7,8-tetrahydrofolate. It catalyses the reaction IMP + H2O = 5-formamido-1-(5-phospho-D-ribosyl)imidazole-4-carboxamide. It participates in purine metabolism; IMP biosynthesis via de novo pathway; 5-formamido-1-(5-phospho-D-ribosyl)imidazole-4-carboxamide from 5-amino-1-(5-phospho-D-ribosyl)imidazole-4-carboxamide (10-formyl THF route): step 1/1. The protein operates within purine metabolism; IMP biosynthesis via de novo pathway; IMP from 5-formamido-1-(5-phospho-D-ribosyl)imidazole-4-carboxamide: step 1/1. The sequence is that of Bifunctional purine biosynthesis protein PurH from Yersinia pseudotuberculosis serotype IB (strain PB1/+).